The primary structure comprises 240 residues: Large ribosomal subunit protein uL2 (240 aa).

The tract at residues 200–240 (HPFGGGGRQHPGKPKSISRNAPPGRKVGDIASKRTGRGGNE) is disordered.

The protein belongs to the universal ribosomal protein uL2 family. Part of the 50S ribosomal subunit. Forms a bridge to the 30S subunit in the 70S ribosome. Interacts weakly with protein L37Ae.

Functionally, one of the primary rRNA binding proteins. Required for association of the 30S and 50S subunits to form the 70S ribosome, for tRNA binding and peptide bond formation. It has been suggested to have peptidyltransferase activity; this is somewhat controversial. Makes several contacts with the 16S rRNA in the 70S ribosome. The sequence is that of Large ribosomal subunit protein uL2 (rpl2) from Haloarcula marismortui (strain ATCC 43049 / DSM 3752 / JCM 8966 / VKM B-1809) (Halobacterium marismortui).